Reading from the N-terminus, the 142-residue chain is Large ribosomal subunit protein uL11 (142 aa).

It belongs to the universal ribosomal protein uL11 family. Part of the ribosomal stalk of the 50S ribosomal subunit. Interacts with L10 and the large rRNA to form the base of the stalk. L10 forms an elongated spine to which L12 dimers bind in a sequential fashion forming a multimeric L10(L12)X complex. Post-translationally, one or more lysine residues are methylated.

In terms of biological role, forms part of the ribosomal stalk which helps the ribosome interact with GTP-bound translation factors. The chain is Large ribosomal subunit protein uL11 from Shewanella amazonensis (strain ATCC BAA-1098 / SB2B).